We begin with the raw amino-acid sequence, 586 residues long: MDQLYLEIEISTQNAETTIYTSVSSFLALYTYRYLNEPKNIQVNFVATKIESGKIALRSSQLRRELTDQHITCREAAKLPAIRDLRLPIYEKDGNTFIAGTCAVCRELIARQPNTELRKLLGFKESCLLAPSEASIWTRFCEVDVVDVVSRLHEGLLLKAVPDEVVRFEQHMNEPVRMHNIYKQAREQANQTENGAKIKRKHRVQIDGRTPKEQLLIEHRFAEGISFTIADLILYPLLRIVFQHCGQMLPHFPLTSTWFSEIDSFDGTCAKILGDLYVPQAASQGEELLSIPDCDATSLYKADPKRYKPRNRIYTSQAEVDLALAKLSELQLVFSTDSEHTYGQQTIDWQKIEPTHAKSSALPQERLERKRQQLENMANAVVSLAQPGDRIVDFCSGTGHLAILLALKLPLCTIIVMENKSFSLAQAQKRALELELSNCVFYQCNIDYFVGRFDIGASLHACGTATDIVLQQCRRSVAHFVCCPCCYGSLQPMPHISYPLSQRFQRVLSTNDYLYIAHTADQAHEMGTTNCKPETTLQGLQCMSIVDTDRKLQSEEAGYQVILTRLKPEQCTPKNHLLVGRFVKQN.

Residues 121 to 276 (LGFKESCLLA…GTCAKILGDL (156 aa)) form the GST C-terminal domain.

Belongs to the GSTCD family.

The polypeptide is Glutathione S-transferase C-terminal domain-containing protein homolog (Drosophila pseudoobscura pseudoobscura (Fruit fly)).